Consider the following 177-residue polypeptide: Crossover junction endodeoxyribonuclease RuvC (177 aa).

Active-site residues include Asp-7, Glu-68, and Asp-141. Mg(2+)-binding residues include Asp-7, Glu-68, and Asp-141.

Belongs to the RuvC family. Homodimer which binds Holliday junction (HJ) DNA. The HJ becomes 2-fold symmetrical on binding to RuvC with unstacked arms; it has a different conformation from HJ DNA in complex with RuvA. In the full resolvosome a probable DNA-RuvA(4)-RuvB(12)-RuvC(2) complex forms which resolves the HJ. Requires Mg(2+) as cofactor.

It is found in the cytoplasm. It catalyses the reaction Endonucleolytic cleavage at a junction such as a reciprocal single-stranded crossover between two homologous DNA duplexes (Holliday junction).. The RuvA-RuvB-RuvC complex processes Holliday junction (HJ) DNA during genetic recombination and DNA repair. Endonuclease that resolves HJ intermediates. Cleaves cruciform DNA by making single-stranded nicks across the HJ at symmetrical positions within the homologous arms, yielding a 5'-phosphate and a 3'-hydroxyl group; requires a central core of homology in the junction. The consensus cleavage sequence is 5'-(A/T)TT(C/G)-3'. Cleavage occurs on the 3'-side of the TT dinucleotide at the point of strand exchange. HJ branch migration catalyzed by RuvA-RuvB allows RuvC to scan DNA until it finds its consensus sequence, where it cleaves and resolves the cruciform DNA. This is Crossover junction endodeoxyribonuclease RuvC from Nocardioides sp. (strain ATCC BAA-499 / JS614).